We begin with the raw amino-acid sequence, 711 residues long: Dendrin (711 aa).

Disordered regions lie at residues 1 to 22 (MLDG…DEES), 49 to 273 (APSR…KKRL), 324 to 446 (DLNS…SQGL), and 479 to 677 (PSGV…AELS). Pro residues predominate over residues 75 to 84 (PGSPQPPPRR). The stretch at 102-134 (LAEVRAREQEKRKAASQEREAKETERKRRKAGG) forms a coiled coil. Over residues 105–127 (VRAREQEKRKAASQEREAKETER) the composition is skewed to basic and acidic residues. A nuclear localization region spans residues 113 to 131 (RKAASQEREAKETERKRRK). The segment covering 150-161 (APRVAQLAGLPA) has biased composition (low complexity). The tract at residues 186–236 (GSAWAGPWGGRRPGPPSYEAHLLLRGSAGTAPRRRWDRPPPYVAPPSYEGP) is interaction with MAGI2. 2 stretches are compositionally biased toward low complexity: residues 252–262 (PTSSAPAATPA) and 346–356 (APAGSATAAPC). The tract at residues 341-436 (AGTEIAPAGS…LEGWKATRRA (96 aa)) is interaction with ACTN1. Ser-389 is subject to Phosphoserine. The tract at residues 408-709 (GGTGWRESLG…IRGTQQGNRK (302 aa)) is interaction with CD2AP and NPHS1. Residues 529 to 546 (GEAEGGRPGDSTLEERTF) are compositionally biased toward basic and acidic residues.

As to quaternary structure, forms a ternary complex with MAGI2 and SH3KBP1; recruits DDN to the cytoplasm. Interacts with MAGI1. Interacts with ACTN1 and may interact with WWC1. Interacts with the podocyte slit diaphragm proteins CD2AP, NPHS1 and NPHS2; the interaction with CD2AP and NPHS1 is direct. As to expression, specifically expressed in brain and kidney. Expressed in kidney glomerular capillary loops (at protein level).

The protein localises to the cell projection. The protein resides in the dendritic spine membrane. It localises to the cytoplasm. Its subcellular location is the endoplasmic reticulum membrane. It is found in the perikaryon. The protein localises to the nucleus. Its function is as follows. Promotes apoptosis of kidney glomerular podocytes. Podocytes are highly specialized cells essential to the ultrafiltration of blood, resulting in the extraction of urine and the retention of protein. The protein is Dendrin (DDN) of Homo sapiens (Human).